The chain runs to 331 residues: Thioredoxin-like fold domain-containing protein MRL7, chloroplastic (331 aa).

The transit peptide at 1–59 directs the protein to the chloroplast; the sequence is MSFFAVACSAPRSSMLLTGLNSSFSDMHRSPLFVFPVTISSRSVKRFAAVSSDSVLDPE. 2 disordered regions span residues 52-105 and 141-160; these read SDSV…ADAV and GVDE…EDPD. Residues 142-160 are compositionally biased toward acidic residues; that stretch reads VDEEEEEEEEMVVEEEDPD.

In terms of assembly, component of the transcriptionally active chromosome (TAC) complexes. Interacts with FSD2 and PRDA1. Interacts with FSD3 and CITRX/TRXZ. Binds to PTAC12/HMR/PAP5. As to expression, expressed in leaves, shoots, stems, cauline leaves, flower buds, flowers and siliques.

It localises to the plastid. The protein resides in the chloroplast. Its subcellular location is the chloroplast stroma. The protein localises to the chloroplast nucleoid. It is found in the nucleus. Plays an essential role in early steps of chloroplast development. Involved in the regulation of plastid gene expression. May positively regulate plastid-encoded RNA polymerase (PEP) activity through binding to FSD3 and CITRX/TRXZ. Involved in redox-mediated regulation of chloroplast development. Possesses disulfide reductase activity in vitro. Required for the proper function of the plastid transcriptional machinery and protein accumulation in thylakoid membranes. May function as molecular chaperone to ensure proper organization of the nucleoids in chloroplasts. May mediate some aspect of thylakoid structure or function that controls non-photochemical quenching (NPQ). Participates in the early light signaling events of photobody biogenesis in chloroplasts. May mediate the degradation of two repressors of chloroplast biogenesis, PIF1 and PIF3 in nucleus. Collaboratively with PTAC12/HMR/PAP5, involved in the regulation of thermoresponsive responses via the stabilization of PIF4 in the daytime to initiate thermomorphogenesis. This Arabidopsis thaliana (Mouse-ear cress) protein is Thioredoxin-like fold domain-containing protein MRL7, chloroplastic.